We begin with the raw amino-acid sequence, 157 residues long: 2-C-methyl-D-erythritol 2,4-cyclodiphosphate synthase (157 aa).

Positions 8 and 10 each coordinate a divalent metal cation. 4-CDP-2-C-methyl-D-erythritol 2-phosphate-binding positions include 8–10 (DVH) and 34–35 (HS). His-42 contributes to the a divalent metal cation binding site. Residues 56–58 (DIG), 61–65 (FPDTD), 100–106 (AQAPKMA), 132–135 (TTTE), Phe-139, and Arg-142 each bind 4-CDP-2-C-methyl-D-erythritol 2-phosphate.

This sequence belongs to the IspF family. In terms of assembly, homotrimer. It depends on a divalent metal cation as a cofactor.

It carries out the reaction 4-CDP-2-C-methyl-D-erythritol 2-phosphate = 2-C-methyl-D-erythritol 2,4-cyclic diphosphate + CMP. The protein operates within isoprenoid biosynthesis; isopentenyl diphosphate biosynthesis via DXP pathway; isopentenyl diphosphate from 1-deoxy-D-xylulose 5-phosphate: step 4/6. In terms of biological role, involved in the biosynthesis of isopentenyl diphosphate (IPP) and dimethylallyl diphosphate (DMAPP), two major building blocks of isoprenoid compounds. Catalyzes the conversion of 4-diphosphocytidyl-2-C-methyl-D-erythritol 2-phosphate (CDP-ME2P) to 2-C-methyl-D-erythritol 2,4-cyclodiphosphate (ME-CPP) with a corresponding release of cytidine 5-monophosphate (CMP). The protein is 2-C-methyl-D-erythritol 2,4-cyclodiphosphate synthase of Pseudomonas aeruginosa (strain ATCC 15692 / DSM 22644 / CIP 104116 / JCM 14847 / LMG 12228 / 1C / PRS 101 / PAO1).